Reading from the N-terminus, the 375-residue chain is 23S rRNA (uracil(747)-C(5))-methyltransferase RlmC (375 aa).

[4Fe-4S] cluster is bound by residues Cys3, Cys11, Cys14, and Cys87. Residues Gln212, Phe241, Glu262, and Asn307 each coordinate S-adenosyl-L-methionine. The active-site Nucleophile is Cys334.

The protein belongs to the class I-like SAM-binding methyltransferase superfamily. RNA M5U methyltransferase family. RlmC subfamily.

The enzyme catalyses uridine(747) in 23S rRNA + S-adenosyl-L-methionine = 5-methyluridine(747) in 23S rRNA + S-adenosyl-L-homocysteine + H(+). In terms of biological role, catalyzes the formation of 5-methyl-uridine at position 747 (m5U747) in 23S rRNA. The polypeptide is 23S rRNA (uracil(747)-C(5))-methyltransferase RlmC (Escherichia coli O157:H7).